We begin with the raw amino-acid sequence, 27 residues long: Fructokinase (27 aa).

This sequence belongs to the ROK (NagC/XylR) family. As to quaternary structure, homodimer. Requires Mg(2+) as cofactor.

The enzyme catalyses D-fructose + ATP = D-fructose 6-phosphate + ADP + H(+). Inhibition by zinc ions. The chain is Fructokinase from Fusobacterium mortiferum.